The chain runs to 464 residues: Na(+)/H(+) antiporter NhaA 2 (464 aa).

Helical transmembrane passes span 53–73 (VGGIILLVAAAAALIWANSPW), 96–116 (LTLGAWAADGLLAIFFLVVGL), 134–154 (ALPIAAAVGGMVVPALIFVLV), 165–185 (GWAIPTATDIAFAVAVLAVIS), 195–215 (FLLTLAVVDDLLAITVIAVFY), 219–239 (IKAWALALAVVPLALFTVCAQ), 257–277 (VLVHESGVHATVAGVLLGFAV), 313–333 (IAIPVFAFFAAGVSIGGLSGL), 340–360 (PITLGIVLGLVAGKPIGILVT), 378–398 (WVDVLGMSMLAGIGFTVSLLI), and 412–432 (FVKIGVLSGSLLAASLAAIVL).

The protein belongs to the NhaA Na(+)/H(+) (TC 2.A.33) antiporter family.

Its subcellular location is the cell membrane. The catalysed reaction is Na(+)(in) + 2 H(+)(out) = Na(+)(out) + 2 H(+)(in). Functionally, na(+)/H(+) antiporter that extrudes sodium in exchange for external protons. The chain is Na(+)/H(+) antiporter NhaA 2 from Mycolicibacterium vanbaalenii (strain DSM 7251 / JCM 13017 / BCRC 16820 / KCTC 9966 / NRRL B-24157 / PYR-1) (Mycobacterium vanbaalenii).